A 756-amino-acid polypeptide reads, in one-letter code: Tubulin glycylase 3B (756 aa).

The tract at residues Thr-104–Gln-123 is disordered. The region spanning Leu-272 to Thr-629 is the TTL domain. Residues Gln-440–Ile-443, Lys-453, and Asp-455 each bind ATP. The interval Ile-709–Thr-736 is disordered. A compositionally biased stretch (low complexity) spans Ser-716–Ala-727.

Its subcellular location is the cytoplasm. The protein resides in the cytoskeleton. It localises to the nucleus. Essential glycylase which modifies both tubulin and non-tubulin proteins, generating side chains of glycine on the gamma-carboxyl groups of specific glutamate residues of target proteins. Monoglycylates alpha-tubulin by adding a single glycine chain to generate monoglycine side chains, but is not involved in elongation step to generate polyglycine side chains on alpha-tubulin. Has the ability to both mono- and polyglycylate non-tubulin proteins such as up (Troponin T). Required for early steps of spermatogenesis. The protein is Tubulin glycylase 3B (TTLL3B) of Drosophila melanogaster (Fruit fly).